We begin with the raw amino-acid sequence, 117 residues long: Putative membrane protein insertion efficiency factor (117 aa).

It belongs to the UPF0161 family.

Its subcellular location is the cell inner membrane. Its function is as follows. Could be involved in insertion of integral membrane proteins into the membrane. The chain is Putative membrane protein insertion efficiency factor from Bartonella henselae (strain ATCC 49882 / DSM 28221 / CCUG 30454 / Houston 1) (Rochalimaea henselae).